The primary structure comprises 178 residues: Large ribosomal subunit protein uL10 (178 aa).

The protein belongs to the universal ribosomal protein uL10 family. Part of the ribosomal stalk of the 50S ribosomal subunit. The N-terminus interacts with L11 and the large rRNA to form the base of the stalk. The C-terminus forms an elongated spine to which L12 dimers bind in a sequential fashion forming a multimeric L10(L12)X complex.

Functionally, forms part of the ribosomal stalk, playing a central role in the interaction of the ribosome with GTP-bound translation factors. The chain is Large ribosomal subunit protein uL10 from Thermosynechococcus vestitus (strain NIES-2133 / IAM M-273 / BP-1).